A 778-amino-acid chain; its full sequence is Ubiquitin thioesterase trabid (778 aa).

RanBP2-type zinc fingers lie at residues lysine 5–leucine 36 and aspartate 89–glycine 118. Residues alanine 187–arginine 197 show a composition bias toward polar residues. Residues alanine 187–glutamine 226 are disordered. Over residues glutamine 198–glutamine 226 the composition is skewed to low complexity. Residues tyrosine 232–arginine 261 form a RanBP2-type 3 zinc finger. The segment at glycine 265–asparagine 290 is disordered. Residues serine 273–glutamine 288 show a composition bias toward low complexity. In terms of domain architecture, OTU spans methionine 507–methionine 665. The Nucleophile role is filled by cysteine 518. Histidine 658 acts as the Proton acceptor in catalysis. A phosphoserine mark is found at serine 770, serine 771, and serine 775.

Belongs to the peptidase C64 family. As to quaternary structure, interacts with Apc.

It carries out the reaction Thiol-dependent hydrolysis of ester, thioester, amide, peptide and isopeptide bonds formed by the C-terminal Gly of ubiquitin (a 76-residue protein attached to proteins as an intracellular targeting signal).. Its function is as follows. Positive regulator of the Wnt signaling pathway. Specifically cleaves 'Lys-63'-linked ubiquitin chains. May act by deubiquitinating APC protein, a negative regulator of Wnt-mediated transcription. Required for an efficient wg response, but not for other signaling responses, in the eye. In Drosophila melanogaster (Fruit fly), this protein is Ubiquitin thioesterase trabid (trbd).